We begin with the raw amino-acid sequence, 39 residues long: Contryphan-Cal1 (39 aa).

An N-terminal signal peptide occupies residues 1–20 (MTRTAVLLLTLLFLVAMAAS). The cysteines at positions 29 and 35 are disulfide-linked.

Expressed by the venom duct.

The protein resides in the secreted. Its function is as follows. Probable neurotoxin. The polypeptide is Contryphan-Cal1 (Californiconus californicus (California cone)).